A 662-amino-acid chain; its full sequence is Probable conjugal transfer protein TrbE part 2 (662 aa).

Position 307-314 (307-314 (GPTGSGKS)) interacts with ATP.

Belongs to the TrbE/VirB4 family.

This Sinorhizobium fredii (strain NBRC 101917 / NGR234) protein is Probable conjugal transfer protein TrbE part 2 (trbEB).